We begin with the raw amino-acid sequence, 500 residues long: L-arabinose isomerase (500 aa).

Mn(2+) is bound by residues E306, E333, H350, and H450.

It belongs to the arabinose isomerase family. Homohexamer. Mn(2+) is required as a cofactor.

It carries out the reaction beta-L-arabinopyranose = L-ribulose. It functions in the pathway carbohydrate degradation; L-arabinose degradation via L-ribulose; D-xylulose 5-phosphate from L-arabinose (bacterial route): step 1/3. In terms of biological role, catalyzes the conversion of L-arabinose to L-ribulose. This Yersinia enterocolitica serotype O:8 / biotype 1B (strain NCTC 13174 / 8081) protein is L-arabinose isomerase.